Here is a 349-residue protein sequence, read N- to C-terminus: Peptide chain release factor 1 (349 aa).

N5-methylglutamine is present on Gln-233.

The protein belongs to the prokaryotic/mitochondrial release factor family. Methylated by PrmC. Methylation increases the termination efficiency of RF1.

The protein localises to the cytoplasm. Functionally, peptide chain release factor 1 directs the termination of translation in response to the peptide chain termination codons UAG and UAA. This is Peptide chain release factor 1 from Pelotomaculum thermopropionicum (strain DSM 13744 / JCM 10971 / SI).